We begin with the raw amino-acid sequence, 65 residues long: Large ribosomal subunit protein bL35 (65 aa).

The disordered stretch occupies residues 1 to 30 (MPKMKTNRGAAKRFRKTASGRFKSKQSHLR). Residues 10–30 (AAKRFRKTASGRFKSKQSHLR) are compositionally biased toward basic residues.

It belongs to the bacterial ribosomal protein bL35 family.

This is Large ribosomal subunit protein bL35 from Pseudoalteromonas atlantica (strain T6c / ATCC BAA-1087).